A 451-amino-acid chain; its full sequence is 12S seed storage protein CRD (451 aa).

An N-terminal signal peptide occupies residues 1–25 (MHKLLFSLLSVVSLSFLLFFHGAEA). Cystine bridges form between Cys-36–Cys-69 and Cys-112–Cys-277. A Phosphoserine modification is found at Ser-39. 2 consecutive Cupin type-1 domains span residues 42-234 (NSLA…ETAK) and 283-432 (ENID…EEAK). Thr-115 carries the post-translational modification Phosphothreonine. Ser-302 bears the Phosphoserine mark. A Phosphothreonine modification is found at Thr-396. The residue at position 437 (Ser-437) is a Phosphoserine.

Belongs to the 11S seed storage protein (globulins) family. As to quaternary structure, hexamer; each subunit is composed of an acidic and a basic chain derived from a single precursor and linked by a disulfide bond. Ubiquitinated. Post-translationally, proteolytically processed during seed maturation at a conserved Asn-Gly peptide bond by an asparaginyl endopeptidase to produce two mature polypeptides referred to as alpha and beta subunits that are joined together by a disulfide bond. In terms of processing, phosphorylated in seeds on some Tyr residues in response to abscisic acid (ABA). Accumulates in seeds 8 days after anthesis.

The protein localises to the protein storage vacuole. In terms of biological role, seed storage protein. This Arabidopsis thaliana (Mouse-ear cress) protein is 12S seed storage protein CRD (CRD).